Reading from the N-terminus, the 509-residue chain is Transmembrane protein 104 homolog (509 aa).

Residues Met1–Gly19 lie on the Cytoplasmic side of the membrane. A helical membrane pass occupies residues Phe20–Ala40. Residues Arg41–Met45 are Extracellular-facing. The chain crosses the membrane as a helical span at residues Leu46 to Ile66. Residues Glu67–Arg151 lie on the Cytoplasmic side of the membrane. Residues Val152 to Ala172 form a helical membrane-spanning segment. At Val173–Asn218 the chain is on the extracellular side. N-linked (GlcNAc...) asparagine glycosylation is found at Asn186, Asn202, and Asn203. Residues Met219–Val239 traverse the membrane as a helical segment. Residues Gln240–Leu248 are Cytoplasmic-facing. Residues Thr249–Ile269 form a helical membrane-spanning segment. At Ser270–Pro277 the chain is on the extracellular side. Residues Ala278–Cys298 traverse the membrane as a helical segment. The Cytoplasmic portion of the chain corresponds to His299–Ser320. A helical membrane pass occupies residues Ile321 to Phe341. The Extracellular portion of the chain corresponds to Glu342 to Asp361. Residues Phe362–Leu382 form a helical membrane-spanning segment. At Ser383–Ser411 the chain is on the cytoplasmic side. Residues Val412–Phe432 traverse the membrane as a helical segment. At Thr433–Leu439 the chain is on the extracellular side. Residues Val440 to Val460 form a helical membrane-spanning segment. The Cytoplasmic segment spans residues Tyr461–Ala487. The chain crosses the membrane as a helical span at residues Trp488–Phe508. A topological domain (extracellular) is located at residue Ser509.

The protein belongs to the TMEM104 family.

It is found in the membrane. The sequence is that of Transmembrane protein 104 homolog from Drosophila melanogaster (Fruit fly).